Here is a 941-residue protein sequence, read N- to C-terminus: Cilia- and flagella-associated protein 69 (941 aa).

The segment covering 1–10 (MWTEEAAATA) has biased composition (low complexity). The disordered stretch occupies residues 1 to 23 (MWTEEAAATAEARESGIRNKSSS).

Its subcellular location is the cell projection. The protein localises to the cilium. The protein resides in the flagellum. In terms of biological role, cilium- and flagellum-associated protein. In the olfactory epithelium, regulates the speed of activation and termination of the odor response and thus contributes to the robustness of olfactory transduction pathways. Required for sperm flagellum assembly and stability. This Papio anubis (Olive baboon) protein is Cilia- and flagella-associated protein 69.